We begin with the raw amino-acid sequence, 485 residues long: Glycogen synthase (485 aa).

ADP-alpha-D-glucose is bound at residue lysine 15.

This sequence belongs to the glycosyltransferase 1 family. Bacterial/plant glycogen synthase subfamily.

It catalyses the reaction [(1-&gt;4)-alpha-D-glucosyl](n) + ADP-alpha-D-glucose = [(1-&gt;4)-alpha-D-glucosyl](n+1) + ADP + H(+). It functions in the pathway glycan biosynthesis; glycogen biosynthesis. In terms of biological role, synthesizes alpha-1,4-glucan chains using ADP-glucose. The chain is Glycogen synthase from Francisella philomiragia subsp. philomiragia (strain ATCC 25017 / CCUG 19701 / FSC 153 / O#319-036).